A 280-amino-acid chain; its full sequence is 2-dehydro-3-deoxyphosphooctonate aldolase (280 aa).

The protein belongs to the KdsA family.

It is found in the cytoplasm. It catalyses the reaction D-arabinose 5-phosphate + phosphoenolpyruvate + H2O = 3-deoxy-alpha-D-manno-2-octulosonate-8-phosphate + phosphate. It participates in carbohydrate biosynthesis; 3-deoxy-D-manno-octulosonate biosynthesis; 3-deoxy-D-manno-octulosonate from D-ribulose 5-phosphate: step 2/3. It functions in the pathway bacterial outer membrane biogenesis; lipopolysaccharide biosynthesis. This Neisseria gonorrhoeae (strain NCCP11945) protein is 2-dehydro-3-deoxyphosphooctonate aldolase.